The chain runs to 539 residues: Phosphoenolpyruvate carboxykinase (ATP) (539 aa).

Positions 64, 206, and 212 each coordinate substrate. ATP contacts are provided by residues K212, H231, and 247–255 (GLSGTGKTT). Residues K212 and H231 each contribute to the Mn(2+) site. Position 268 (D268) interacts with Mn(2+). ATP-binding positions include E296, R332, 448–449 (RI), and T454. R332 contributes to the substrate binding site.

It belongs to the phosphoenolpyruvate carboxykinase (ATP) family. In terms of assembly, monomer. The cofactor is Mn(2+).

The protein localises to the cytoplasm. The enzyme catalyses oxaloacetate + ATP = phosphoenolpyruvate + ADP + CO2. The protein operates within carbohydrate biosynthesis; gluconeogenesis. Involved in the gluconeogenesis. Catalyzes the conversion of oxaloacetate (OAA) to phosphoenolpyruvate (PEP) through direct phosphoryl transfer between the nucleoside triphosphate and OAA. The protein is Phosphoenolpyruvate carboxykinase (ATP) of Pectobacterium atrosepticum (strain SCRI 1043 / ATCC BAA-672) (Erwinia carotovora subsp. atroseptica).